The chain runs to 498 residues: Lysine--tRNA ligase (498 aa).

Glu-409 and Glu-416 together coordinate Mg(2+).

It belongs to the class-II aminoacyl-tRNA synthetase family. In terms of assembly, homodimer. Requires Mg(2+) as cofactor.

It localises to the cytoplasm. It catalyses the reaction tRNA(Lys) + L-lysine + ATP = L-lysyl-tRNA(Lys) + AMP + diphosphate. The chain is Lysine--tRNA ligase from Teredinibacter turnerae (strain ATCC 39867 / T7901).